The sequence spans 360 residues: Photosystem II protein D1 (360 aa).

The next 3 helical transmembrane spans lie at 30–47 (YVGW…AAAA), 119–134 (HFLI…QWEL), and 143–157 (WICV…AAFA). H119 is a binding site for chlorophyll a. Residue Y127 participates in pheophytin a binding. Positions 171 and 190 each coordinate [CaMn4O5] cluster. The chain crosses the membrane as a helical span at residues 198–219 (FHMAGVAGMFGGSLFSAMHGSL). H199 is a chlorophyll a binding site. A quinone is bound by residues H216 and 265–266 (SF). H216 contributes to the Fe cation binding site. Fe cation is bound at residue H273. A helical transmembrane segment spans residues 275–289 (FLAVFPVVCVWLTSM). Positions 333, 334, 343, and 345 each coordinate [CaMn4O5] cluster. A propeptide spanning residues 346–360 (AAESTTVALTAPAIG) is cleaved from the precursor.

Belongs to the reaction center PufL/M/PsbA/D family. As to quaternary structure, PSII is composed of 1 copy each of membrane proteins PsbA, PsbB, PsbC, PsbD, PsbE, PsbF, PsbH, PsbI, PsbJ, PsbK, PsbL, PsbM, PsbT, PsbX, PsbY, Psb30/Ycf12, peripheral proteins PsbO, CyanoQ (PsbQ), PsbU, PsbV and a large number of cofactors. It forms dimeric complexes. It depends on The D1/D2 heterodimer binds P680, chlorophylls that are the primary electron donor of PSII, and subsequent electron acceptors. It shares a non-heme iron and each subunit binds pheophytin, quinone, additional chlorophylls, carotenoids and lipids. D1 provides most of the ligands for the Mn4-Ca-O5 cluster of the oxygen-evolving complex (OEC). There is also a Cl(-1) ion associated with D1 and D2, which is required for oxygen evolution. The PSII complex binds additional chlorophylls, carotenoids and specific lipids. as a cofactor. In terms of processing, tyr-162 forms a radical intermediate that is referred to as redox-active TyrZ, YZ or Y-Z. C-terminally processed by CtpA; processing is essential to allow assembly of the oxygen-evolving complex and thus photosynthetic growth.

It localises to the cellular thylakoid membrane. The catalysed reaction is 2 a plastoquinone + 4 hnu + 2 H2O = 2 a plastoquinol + O2. Functionally, photosystem II (PSII) is a light-driven water:plastoquinone oxidoreductase that uses light energy to abstract electrons from H(2)O, generating O(2) and a proton gradient subsequently used for ATP formation. It consists of a core antenna complex that captures photons, and an electron transfer chain that converts photonic excitation into a charge separation. The D1/D2 (PsbA/PsbD) reaction center heterodimer binds P680, the primary electron donor of PSII as well as several subsequent electron acceptors. The polypeptide is Photosystem II protein D1 (Prochlorococcus marinus (strain MIT 9515)).